The following is a 631-amino-acid chain: E3 ubiquitin-protein ligase Zswim2 (631 aa).

Residues 54–87 (FRVLLGNPHECSCPTFLKRGELCKHICWVLLKKF) form an SWIM-type zinc finger. A UBE2D1-binding region spans residues 139-348 (KDINAGDICP…APGYQCRLCL (210 aa)). The RING-type 1 zinc-finger motif lies at 147–199 (CPICQEVLLEKKLPVTFCRFGCGNNVHIKCMRILANYQDTGSDSSVLRCPLCR). Residues 230-281 (HLGIPCNNCNQLPIEGRCYKCTECVEYHLCQECFDSCCHSSHAFASREKRNQ) form a ZZ-type zinc finger. Cysteine 235, cysteine 238, cysteine 250, cysteine 253, cysteine 259, cysteine 262, histidine 268, and histidine 271 together coordinate Zn(2+). The RING-type 2 zinc finger occupies 344–386 (CRLCLKSFSFGQYTRLLPCTHKFHRKCIDNWLLHKCNSCPIDR). Positions 589–614 (SKRQNNSMGKVRQKLGHPPRRPAYPP) are disordered. A compositionally biased stretch (basic residues) spans 599–608 (VRQKLGHPPR).

Dimer. Interacts with UBE2D1. Post-translationally, polyubiquitinated. Polyubiquitination is followed by degradation via the proteasome. Expressed only in testis.

It catalyses the reaction S-ubiquitinyl-[E2 ubiquitin-conjugating enzyme]-L-cysteine + [acceptor protein]-L-lysine = [E2 ubiquitin-conjugating enzyme]-L-cysteine + N(6)-ubiquitinyl-[acceptor protein]-L-lysine.. Functionally, E3 ubiquitin-protein ligase involved in the regulation of Fas-, DR3- and DR4-mediated apoptosis. Functions in conjunction with the UBE2D1, UBE2D3 and UBE2E1 E2 ubiquitin-conjugating enzymes. The sequence is that of E3 ubiquitin-protein ligase Zswim2 (Zswim2) from Mus musculus (Mouse).